The chain runs to 388 residues: Galactokinase (388 aa).

Substrate is bound at residue 33–36 (EHTD). Residues Ser67 and 125–131 (GAGLSSS) each bind ATP. Ser131 and Glu163 together coordinate Mg(2+). The active-site Proton acceptor is the Asp175. Substrate is bound at residue Tyr225.

The protein belongs to the GHMP kinase family. GalK subfamily.

The protein localises to the cytoplasm. The enzyme catalyses alpha-D-galactose + ATP = alpha-D-galactose 1-phosphate + ADP + H(+). It functions in the pathway carbohydrate metabolism; galactose metabolism. In terms of biological role, catalyzes the transfer of the gamma-phosphate of ATP to D-galactose to form alpha-D-galactose-1-phosphate (Gal-1-P). The chain is Galactokinase from Limosilactobacillus fermentum (strain NBRC 3956 / LMG 18251) (Lactobacillus fermentum).